Reading from the N-terminus, the 530-residue chain is Tegument protein UL21 homolog (530 aa).

The protein belongs to the alphaherpesvirinae UL21 protein family. In terms of assembly, interacts (via C-terminus) with UL16.

The protein resides in the virion tegument. It localises to the host cytoplasm. It is found in the host nucleus. In terms of biological role, may participate in DNA packaging/capsid maturation events. Promotes efficient incorporation of tegument proteins UL46, UL49, and US3 homologs into virions. May also play a role in capsid transport to the trans-Golgi network (TGN). In Equus caballus (Horse), this protein is Tegument protein UL21 homolog.